The sequence spans 58 residues: Mu-diguetoxin-Dc1b (58 aa).

4 disulfides stabilise this stretch: C12–C26, C20–C40, C25–C54, and C42–C52.

It belongs to the neurotoxin 26 (DTX) family. In terms of tissue distribution, expressed by the venom gland.

It localises to the secreted. Its function is as follows. Acts by delaying the inactivation of presynaptic voltage-sensitive sodium channels (Nav). Acts against insects and cause a progressive spastic paralysis. The sequence is that of Mu-diguetoxin-Dc1b from Diguetia canities (Desert bush spider).